Reading from the N-terminus, the 227-residue chain is MEQPVGQPAYVLHSRAYKETSALVDFFTPQGRVRAVLRRARGKGGSLVRPFVPLEVELRGRSELKNVGRLDSMGIAAWLHGDALFSGLYLNELLMRLLPAEAPQPELFEHYALTLQALAAGRPLEPLLRSFEWRLLEDLGYAFALDHDVSDEPIEADGLYRLQVDAGLERVYLVQPGLFNGAELLALAQADWDAPGALLAAKRLMRQALAVHLGPKPLVSRELFRKR.

It belongs to the RecO family.

Functionally, involved in DNA repair and RecF pathway recombination. In Pseudomonas putida (strain W619), this protein is DNA repair protein RecO.